A 371-amino-acid chain; its full sequence is tRNA-specific 2-thiouridylase MnmA (371 aa).

Residues 13–20 (GMSGGVDS) and Met-39 each bind ATP. The tract at residues 99–101 (NPD) is interaction with target base in tRNA. Cys-104 functions as the Nucleophile in the catalytic mechanism. Cys-104 and Cys-200 are joined by a disulfide. Gly-128 provides a ligand contact to ATP. The segment at 150 to 152 (KDQ) is interaction with tRNA. The Cysteine persulfide intermediate role is filled by Cys-200. An interaction with tRNA region spans residues 308-309 (RY).

Belongs to the MnmA/TRMU family.

The protein resides in the cytoplasm. The enzyme catalyses S-sulfanyl-L-cysteinyl-[protein] + uridine(34) in tRNA + AH2 + ATP = 2-thiouridine(34) in tRNA + L-cysteinyl-[protein] + A + AMP + diphosphate + H(+). Functionally, catalyzes the 2-thiolation of uridine at the wobble position (U34) of tRNA, leading to the formation of s(2)U34. This chain is tRNA-specific 2-thiouridylase MnmA, found in Bacillus cytotoxicus (strain DSM 22905 / CIP 110041 / 391-98 / NVH 391-98).